A 291-amino-acid polypeptide reads, in one-letter code: Probable cell wall amidase LytH (291 aa).

Residues 1–40 (MKKIEAWLSKKGLKNKRTLIVVIAFVLFIIFLFLLLNSNS) form the signal peptide. In terms of domain architecture, SH3b spans 41–105 (EDSGNITITE…WIAGWHTNLD (65 aa)). Residues 118-140 (QGKTIVLDPGHGGSDQGASSNTK) form a disordered region. The MurNAc-LAA domain maps to 122–286 (IVLDPGHGGS…LEQAIVDGLK (165 aa)).

Belongs to the N-acetylmuramoyl-L-alanine amidase 3 family.

It is found in the secreted. In terms of biological role, probably involved in cell-wall metabolism. This Staphylococcus aureus (strain USA300) protein is Probable cell wall amidase LytH (lytH).